The primary structure comprises 578 residues: Endonuclease GajA (578 aa).

Positions M1 to K341 are ATPase domain. D32–T36 is a binding site for ATP. The tract at residues L370–I510 is toprim domain. Residues E379, E383, D463, E464, and E513 each coordinate a divalent metal cation.

Homotetramer. Forms the core of the anti-phage defense complex. Interacts with GajB; 2 GajB dimers dock at opposite sides of the GajA complex to form a 4:4 GajA-GajB assembly (GajAB). GajAB interacts with Bacillus phage Phi3T Gad1 protein; this interaction forms a 4:4:8 GajAB-Gad1 complex and leads to GajAB inhibition. Requires Mg(2+) as cofactor. Mn(2+) is required as a cofactor.

Its activity is regulated as follows. Endonuclease activity inhibited by all NTPs, dNTPs, NDPs (at 0.5 mM, UDP not tested) and AMP-PNP; not inhibited by any tested NMP, dNMP or nucleoside. Inhibited by 100 mM NaCl, 100 mM KCl, 0.5 mM Co(2+) and 0.5 mM Ni(2+). In terms of biological role, component of antiviral defense system Gabija type I, composed of GajA and GajB. Endonuclease that nicks double-stranded DNA within the sequence 5'-TNNNCGGGNNA-3' in the absence of nucleotides (NTP, dNTP and NDPs), cleaving after C-1. Has no detected ATPase activity. Expression of Gabija type I in B.subtilis (strain BEST7003) confers resistance to phages phi105, phi29, rho14, SpBeta and SBSphiC. Expression of Gabija type I in E.coli B (strain ATCC 11303) confers resistance to phage T7. It is thought that this enzyme is strongly suppressed during physiological growth (in E.coli total nucleotide concentration is over 8.7 mM in mid-log phase), but during viral replication, when nucleotides are rapidly consumed, it is de-suppressed and degrades target DNA. The chain is Endonuclease GajA from Bacillus cereus (strain VD045).